A 1024-amino-acid polypeptide reads, in one-letter code: Protein sumv-1 (1024 aa).

Disordered regions lie at residues 447 to 486 (DASQFGGGKKKQRLPPRRSPSFGTSPNSYQFHQQSQKKMP), 501 to 564 (NFQG…RRGV), 577 to 617 (PSRH…RSQA), 645 to 664 (SQMAGQRPGMTPSAQQGSPQ), 710 to 739 (VRSGSSSSVAGPSRSSVASGSQHTALDTVQ), and 773 to 1024 (AGNS…EEEL). 3 stretches are compositionally biased toward polar residues: residues 467 to 486 (SFGTSPNSYQFHQQSQKKMP), 501 to 514 (NFQGWKNQSTSSAT), and 528 to 542 (RSQQPKMIPLEQTQD). A compositionally biased stretch (low complexity) spans 584–600 (SPLTPSTSTSSSQLLAP). A compositionally biased stretch (polar residues) spans 605 to 617 (QPGTSSQTFRSQA). 2 stretches are compositionally biased toward low complexity: residues 710–730 (VRSGSSSSVAGPSRSSVASGS) and 784–809 (AGAPGAKESSKAAGGAQKGTSAASTS). The span at 810 to 832 (VPEPTKSSESSVDPQSDVSFSNP) shows a compositional bias: polar residues. Residues 859–870 (TLASESTSSEAT) are compositionally biased toward low complexity. Polar residues predominate over residues 873–883 (HDTTSSSSAET). The span at 903 to 914 (PEKEKEKIDRPK) shows a compositional bias: basic and acidic residues. Composition is skewed to low complexity over residues 916–943 (PKSSTKRTTPTPSGRTPRAAAIAANQAI), 952–962 (SASTSSSAAST), and 970–986 (LLAELSVAAAAEEQQQA). The span at 987–998 (IGSTSKNGGSTK) shows a compositional bias: polar residues.

The protein localises to the nucleus. The protein resides in the cytoplasm. It localises to the cell projection. Its subcellular location is the axon. Functionally, nuclear factor that influences the activity of genes involved in vulval development. The protein is Protein sumv-1 of Caenorhabditis elegans.